A 148-amino-acid chain; its full sequence is 3-dehydroquinate dehydratase 2 (148 aa).

Tyrosine 24 functions as the Proton acceptor in the catalytic mechanism. Residues asparagine 75, histidine 81, and aspartate 88 each contribute to the substrate site. The Proton donor role is filled by histidine 101. Residues leucine 102 to serine 103 and arginine 112 each bind substrate.

Belongs to the type-II 3-dehydroquinase family. As to quaternary structure, homododecamer.

It catalyses the reaction 3-dehydroquinate = 3-dehydroshikimate + H2O. It participates in metabolic intermediate biosynthesis; chorismate biosynthesis; chorismate from D-erythrose 4-phosphate and phosphoenolpyruvate: step 3/7. In terms of biological role, catalyzes a trans-dehydration via an enolate intermediate. In Pseudomonas aeruginosa (strain ATCC 15692 / DSM 22644 / CIP 104116 / JCM 14847 / LMG 12228 / 1C / PRS 101 / PAO1), this protein is 3-dehydroquinate dehydratase 2 (aroQ2).